The following is a 277-amino-acid chain: MLFRAMGYVIAAFYRFVHLHNYYDMKPVILEFCLSRGIKGTVILAEQGINATIAGSRQSIGEFFSFLDSDDRLRGMKYHESHSDREPFAKMKVRLKREVVRLGIDGFDCSLRGEYIDPRDWDEFVSSPDVHVIDTRNDYEVRLGRFKGAIDPGTSSFREFPEWARNWALDKERDTCVAMYCTGGIRCEKSTAFMRSLGFRNVYHLRGGILNYLETMRGDDSLWEGECFVFDDRIAVDRNVSPSEDIKCIKCAGEVDASDLRSVSKGNIMCWDCRLQA.

The Rhodanese domain occupies 126–221 (SSPDVHVIDT…YLETMRGDDS (96 aa)). Cys-181 acts as the Cysteine persulfide intermediate in catalysis.

It belongs to the TrhO family.

It catalyses the reaction uridine(34) in tRNA + AH2 + O2 = 5-hydroxyuridine(34) in tRNA + A + H2O. In terms of biological role, catalyzes oxygen-dependent 5-hydroxyuridine (ho5U) modification at position 34 in tRNAs. The chain is tRNA uridine(34) hydroxylase from Anaplasma marginale (strain St. Maries).